We begin with the raw amino-acid sequence, 229 residues long: 2,3-bisphosphoglycerate-dependent phosphoglycerate mutase (229 aa).

Substrate contacts are provided by residues 7–14, 20–21, Arg-59, 86–89, Lys-97, 113–114, and 182–183; these read RHGQSEWN, TG, ERHY, RR, and GN. His-8 acts as the Tele-phosphohistidine intermediate in catalysis. Glu-86 serves as the catalytic Proton donor/acceptor.

This sequence belongs to the phosphoglycerate mutase family. BPG-dependent PGAM subfamily.

It catalyses the reaction (2R)-2-phosphoglycerate = (2R)-3-phosphoglycerate. It functions in the pathway carbohydrate degradation; glycolysis; pyruvate from D-glyceraldehyde 3-phosphate: step 3/5. Functionally, catalyzes the interconversion of 2-phosphoglycerate and 3-phosphoglycerate. In Listeria innocua serovar 6a (strain ATCC BAA-680 / CLIP 11262), this protein is 2,3-bisphosphoglycerate-dependent phosphoglycerate mutase.